A 271-amino-acid chain; its full sequence is Sec-independent protein translocase protein TatC (271 aa).

A run of 6 helical transmembrane segments spans residues 35–55, 93–113, 124–144, 178–198, 213–233, and 234–254; these read IIWT…WHEQ, AFIA…WLFI, YVLP…VFGY, IILG…LALM, SILV…IMNM, and CVFA…AFLV.

This sequence belongs to the TatC family. In terms of assembly, forms a complex with TatA.

The protein localises to the cell inner membrane. Its function is as follows. Part of the twin-arginine translocation (Tat) system that transports large folded proteins containing a characteristic twin-arginine motif in their signal peptide across membranes. This is Sec-independent protein translocase protein TatC from Koribacter versatilis (strain Ellin345).